The sequence spans 131 residues: MISKAIIKKVSIAPRKARLVVDLIRGKEIKVAKAILMFTPKSASSIVLKLLNSAEANLAQNINLKSNDFYISEVYVNEGIRLKRLFPRAKGSGDMIKKRTSHIVLKLSMAKEIKEEIKAKKKEVNIHGTKI.

It belongs to the universal ribosomal protein uL22 family. As to quaternary structure, part of the 50S ribosomal subunit.

Functionally, this protein binds specifically to 23S rRNA; its binding is stimulated by other ribosomal proteins, e.g. L4, L17, and L20. It is important during the early stages of 50S assembly. It makes multiple contacts with different domains of the 23S rRNA in the assembled 50S subunit and ribosome. In terms of biological role, the globular domain of the protein is located near the polypeptide exit tunnel on the outside of the subunit, while an extended beta-hairpin is found that lines the wall of the exit tunnel in the center of the 70S ribosome. This chain is Large ribosomal subunit protein uL22, found in Phytoplasma mali (strain AT).